Here is a 488-residue protein sequence, read N- to C-terminus: Probable glycine dehydrogenase (decarboxylating) subunit 2 (488 aa).

Position 274 is an N6-(pyridoxal phosphate)lysine (K274).

It belongs to the GcvP family. C-terminal subunit subfamily. As to quaternary structure, the glycine cleavage system is composed of four proteins: P, T, L and H. In this organism, the P 'protein' is a heterodimer of two subunits. Pyridoxal 5'-phosphate is required as a cofactor.

The enzyme catalyses N(6)-[(R)-lipoyl]-L-lysyl-[glycine-cleavage complex H protein] + glycine + H(+) = N(6)-[(R)-S(8)-aminomethyldihydrolipoyl]-L-lysyl-[glycine-cleavage complex H protein] + CO2. In terms of biological role, the glycine cleavage system catalyzes the degradation of glycine. The P protein binds the alpha-amino group of glycine through its pyridoxal phosphate cofactor; CO(2) is released and the remaining methylamine moiety is then transferred to the lipoamide cofactor of the H protein. In Listeria welshimeri serovar 6b (strain ATCC 35897 / DSM 20650 / CCUG 15529 / CIP 8149 / NCTC 11857 / SLCC 5334 / V8), this protein is Probable glycine dehydrogenase (decarboxylating) subunit 2.